The sequence spans 350 residues: tRNA uridine(34) hydroxylase (350 aa).

The Rhodanese domain maps to 146-240 (DDPDALFIDM…YARKAREQGL (95 aa)). The active-site Cysteine persulfide intermediate is the Cys-200.

Belongs to the TrhO family.

The enzyme catalyses uridine(34) in tRNA + AH2 + O2 = 5-hydroxyuridine(34) in tRNA + A + H2O. Functionally, catalyzes oxygen-dependent 5-hydroxyuridine (ho5U) modification at position 34 in tRNAs, the first step in 5-carboxymethoxyuridine (cmo5U) biosynthesis. May be part of an alternate pathway, which is able to bypass cmo5U biogenesis in a subset of tRNAs under aerobic conditions. In Escherichia coli O127:H6 (strain E2348/69 / EPEC), this protein is tRNA uridine(34) hydroxylase.